Consider the following 283-residue polypeptide: Large ribosomal subunit protein mL46 (283 aa).

Lysine 217 carries the N6-succinyllysine modification. Residue lysine 228 is modified to N6-acetyllysine. Lysine 246 bears the N6-succinyllysine mark.

Belongs to the mitochondrion-specific ribosomal protein mL46 family. In terms of assembly, component of the mitochondrial ribosome large subunit (39S) which comprises a 16S rRNA and about 50 distinct proteins.

It is found in the mitochondrion. The polypeptide is Large ribosomal subunit protein mL46 (Mrpl46) (Mus musculus (Mouse)).